Consider the following 371-residue polypeptide: Riboflavin biosynthesis protein RibD (371 aa).

Residues 1–150 (MEVSSEQQLF…QPYLHQRETG (150 aa)) form a deaminase region. Residues 6–128 (EQQLFFMREA…RLKEAGISVY (123 aa)) form the CMP/dCMP-type deaminase domain. Histidine 55 is a binding site for Zn(2+). The Proton donor role is filled by glutamate 57. Cysteine 80 and cysteine 89 together coordinate Zn(2+). The reductase stretch occupies residues 151–371 (LPWVVMKTAA…CFECVGREDG (221 aa)). Residue alanine 159 participates in NADP(+) binding. Serine 173 contributes to the substrate binding site. Tryptophan 175 serves as a coordination point for NADP(+). Arginine 189 is a binding site for substrate. 2 residues coordinate NADP(+): threonine 201 and aspartate 205. Substrate is bound by residues leucine 209 and arginine 212. Serine 230 is an NADP(+) binding site. Glutamate 299 contributes to the substrate binding site. 301-307 (GARLHSA) is a binding site for NADP(+).

It in the N-terminal section; belongs to the cytidine and deoxycytidylate deaminase family. In the C-terminal section; belongs to the HTP reductase family. The cofactor is Zn(2+).

The catalysed reaction is 2,5-diamino-6-hydroxy-4-(5-phosphoribosylamino)-pyrimidine + H2O + H(+) = 5-amino-6-(5-phospho-D-ribosylamino)uracil + NH4(+). The enzyme catalyses 5-amino-6-(5-phospho-D-ribitylamino)uracil + NADP(+) = 5-amino-6-(5-phospho-D-ribosylamino)uracil + NADPH + H(+). Its pathway is cofactor biosynthesis; riboflavin biosynthesis; 5-amino-6-(D-ribitylamino)uracil from GTP: step 2/4. It functions in the pathway cofactor biosynthesis; riboflavin biosynthesis; 5-amino-6-(D-ribitylamino)uracil from GTP: step 3/4. Functionally, converts 2,5-diamino-6-(ribosylamino)-4(3h)-pyrimidinone 5'-phosphate into 5-amino-6-(ribosylamino)-2,4(1h,3h)-pyrimidinedione 5'-phosphate. In Chlamydia muridarum (strain MoPn / Nigg), this protein is Riboflavin biosynthesis protein RibD (ribD).